The following is a 175-amino-acid chain: MKFLSTAAALLVCLAPVSTTARSLDFFKSSQSPIQAQAKSVPGNNPLEYCNDPSGDILDIKQVDLSPNPPLPGKTLAITASGTLREKIEDGAYVLLEVKYGLITLVRQTADLCEQLVNVELKCPLGPGDMTLTKQVDLPKQIPPGKYTVQADVFNSDGEHITCLKALNIEFKGPF.

The N-terminal stretch at 1–21 (MKFLSTAAALLVCLAPVSTTA) is a signal peptide. Residues 22–37 (RSLDFFKSSQSPIQAQ) constitute a propeptide that is removed on maturation.

This sequence belongs to the NPC2 family. In terms of assembly, monomer.

It localises to the cytoplasm. Its subcellular location is the cytoplasmic vesicle. The protein localises to the golgi apparatus. Catalyzes the intermembrane transfer of phosphatidylglycerol and phosphatidylinositol. The sequence is that of Phosphatidylglycerol/phosphatidylinositol transfer protein (pltp) from Aspergillus oryzae (strain ATCC 42149 / RIB 40) (Yellow koji mold).